Here is a 142-residue protein sequence, read N- to C-terminus: Snaclec GPIB-binding protein subunit alpha (142 aa).

3 cysteine pairs are disulfide-bonded: Cys6–Cys17, Cys39–Cys136, and Cys111–Cys128. Positions 13 to 137 (HRQYCYKFFQ…CVEGNPFVCK (125 aa)) constitute a C-type lectin domain.

This sequence belongs to the snaclec family. Heterodimer of subunits alpha and beta; disulfide-linked. As to expression, expressed by the venom gland.

The protein localises to the secreted. Binds to platelet GPIb (subunit alpha) (GP1BA) and functions as a receptor blocker for vWF binding to GPIb. The platelet GPIb-binding site resides on the GPIB-BP subunit beta and not on the alpha subunit. At a final concentration of 104 nM totally abolishes vWF-dependent shear-induced platelet aggregation (SIPA) at a high shear stress, but had no effect on SIPA at a low shear stress. This Bothrops jararaca (Jararaca) protein is Snaclec GPIB-binding protein subunit alpha.